Here is a 452-residue protein sequence, read N- to C-terminus: Phosphoglucosamine mutase (452 aa).

The Phosphoserine intermediate role is filled by Ser-103. Residues Ser-103, Asp-243, Asp-245, and Asp-247 each contribute to the Mg(2+) site. The residue at position 103 (Ser-103) is a Phosphoserine.

It belongs to the phosphohexose mutase family. Mg(2+) is required as a cofactor. In terms of processing, activated by phosphorylation.

The catalysed reaction is alpha-D-glucosamine 1-phosphate = D-glucosamine 6-phosphate. Its function is as follows. Catalyzes the conversion of glucosamine-6-phosphate to glucosamine-1-phosphate. The sequence is that of Phosphoglucosamine mutase from Exiguobacterium sp. (strain ATCC BAA-1283 / AT1b).